A 103-amino-acid polypeptide reads, in one-letter code: Large ribosomal subunit protein eL43 (103 aa).

The protein belongs to the eukaryotic ribosomal protein eL43 family.

This Tetrahymena thermophila (strain SB210) protein is Large ribosomal subunit protein eL43 (RPL37A).